A 529-amino-acid chain; its full sequence is Ell-associated factor Eaf (529 aa).

Disordered stretches follow at residues A155 to T235 and A253 to D529. A compositionally biased stretch (polar residues) spans E167–N186. 4 stretches are compositionally biased toward low complexity: residues R194 to S215, S256 to G265, H306 to N315, and Q327 to Q346. S196 carries the phosphoserine modification. The span at R347–M359 shows a compositional bias: polar residues. Residues D401 to D416 show a composition bias toward acidic residues. Low complexity-rich tracts occupy residues H431–Q451, Q469–Q480, Q488–S499, and N510–S523.

The protein belongs to the EAF family.

Its subcellular location is the nucleus. In terms of biological role, promotes transcriptional elongation by Su(Tpl)/ELL. Essential for development. This Drosophila grimshawi (Hawaiian fruit fly) protein is Ell-associated factor Eaf.